Reading from the N-terminus, the 473-residue chain is Argininosuccinate lyase (473 aa).

The protein belongs to the lyase 1 family. Argininosuccinate lyase subfamily.

Its subcellular location is the cytoplasm. The catalysed reaction is 2-(N(omega)-L-arginino)succinate = fumarate + L-arginine. It functions in the pathway amino-acid biosynthesis; L-arginine biosynthesis; L-arginine from L-ornithine and carbamoyl phosphate: step 3/3. This is Argininosuccinate lyase from Bordetella pertussis (strain Tohama I / ATCC BAA-589 / NCTC 13251).